The primary structure comprises 2034 residues: Host cell factor 1 (2034 aa).

Position 2 is an N-acetylalanine (alanine 2). Serine 6 is subject to Phosphoserine. Kelch repeat units lie at residues 44-89 (LIVV…GFVC), 93-140 (RLLV…RLGH), 148-194 (KCYL…ITYG), 217-265 (KLVI…TIGN), and 266-313 (KMYV…LMDT). Glycyl lysine isopeptide (Lys-Gly) (interchain with G-Cter in ubiquitin) cross-links involve residues lysine 105, lysine 163, and lysine 244. Residue lysine 282 forms a Glycyl lysine isopeptide (Lys-Gly) (interchain with G-Cter in SUMO2) linkage. Residue lysine 288 is modified to N6-acetyllysine. Residue lysine 363 forms a Glycyl lysine isopeptide (Lys-Gly) (interchain with G-Cter in ubiquitin) linkage. In terms of domain architecture, Fibronectin type-III 1 spans 366–469 (PPARVQLVRA…TIQVLPTVPG (104 aa)). The interval 407–434 (ATATSPTPNPVPSVPANPPKSPAPAAAA) is disordered. Serine 411 carries the post-translational modification Phosphoserine. Residues 413–428 (TPNPVPSVPANPPKSP) are compositionally biased toward pro residues. The required for interaction with OGT stretch occupies residues 500-550 (LVTMRPASQAGKAPVTVTSLPASVRMVVPTQSAQGTVIGSNPQMSGMAALA). Residues arginine 504 and arginine 524 each carry the omega-N-methylarginine modification. A phosphoserine mark is found at serine 598, serine 666, and serine 669. The interaction with SIN3A stretch occupies residues 610–722 (LKTAAAQVGT…KGPLPAGTIL (113 aa)). An interaction with ZBTB17 region spans residues 750 to 902 (ILGISSVSPS…SLAGAGAHST (153 aa)). Lysine 813 bears the N6-acetyllysine mark. The segment at 813–912 (KIITAVPKIA…SASLATPITT (100 aa)) is interaction with GABP2. HCF repeat repeat units lie at residues 1010–1035 (TLVC…TVVA), 1072–1097 (VRVC…ATSN), and 1101–1126 (QHGC…AMSS). Residues 1156 to 1182 (RAQGTVKPPCQTQQTNMTSTTMTVQAT) form an HCF repeat 4; degenerate repeat. Phosphoserine occurs at positions 1204 and 1223. 4 disordered regions span residues 1221 to 1241 (GPSS…TYTT), 1302 to 1374 (PCET…TTST), 1444 to 1477 (TVTS…NITS), and 1491 to 1525 (RAVT…QLPP). HCF repeat repeat units lie at residues 1295-1320 (TQVC…SNAG) and 1323-1348 (QRVC…ATSN). A compositionally biased stretch (low complexity) spans 1308-1321 (TGTTNTATTSNAGS). The stretch at 1358-1383 (QQPASGHPCETHQTTSTGTTMSVSVG) is one HCF repeat 7; degenerate repeat. The stretch at 1423–1448 (QRVCSNPPCETHETGTTHTATTVTSN) is one HCF repeat 8 repeat. The segment covering 1491 to 1501 (RAVTTVTQSTP) has biased composition (low complexity). Phosphothreonine is present on threonine 1500. A compositionally biased stretch (pro residues) spans 1502–1511 (VPGPSVPPPE). Serine 1506 and serine 1516 each carry phosphoserine. The stretch at 1693–1723 (IVLTQQELAALVQQQQQLQEAQAQAQQQHHL) forms a coiled coil. Serine 1782 bears the Phosphoserine mark. Fibronectin type-III domains lie at 1808–1899 (LPPP…TCLP) and 1901–2017 (FPGA…TSKD). Residues lysine 1818 and lysine 1819 each participate in a glycyl lysine isopeptide (Lys-Gly) (interchain with G-Cter in ubiquitin) cross-link. Serine 1849 carries the post-translational modification Phosphoserine. The disordered stretch occupies residues 2005–2034 (ATQVRWLQETSKDSSGTKPASKRPMSSPEM). Lysine 2016 is modified (N6-acetyllysine).

As to quaternary structure, composed predominantly of six polypeptides ranging from 110 to 150 kDa and a minor 300 kDa polypeptide. The majority of N- and C-terminal cleavage products remain tightly, albeit non-covalently, associated. Interacts with POU2F1, CREB3, ZBTB17, EGR2, E2F4, CREBZF, SP1, GABP2, Sin3 HDAC complex (SIN3A, HDAC1, HDAC2, SUDS3), SAP30, SIN3B and FHL2. Component of a MLL1 complex, composed of at least the core components KMT2A/MLL1, ASH2L, HCFC1, WDR5 and RBBP5, as well as the facultative components BACC1, CHD8, DPY30, E2F6, HCFC2, HSP70, INO80C, KANSL1, LAS1L, MAX, MCRS1, MEN1, MGA, KAT8, PELP1, PHF20, PRP31, RING2, RUVBL1, RUVBL2, SENP3, TAF1, TAF4, TAF6, TAF7, TAF9 and TEX10. Component of a THAP1/THAP3-HCFC1-OGT complex that is required for the regulation of the transcriptional activity of RRM1. Interacts directly with THAP3 (via its HBM). Interacts (via the Kelch-repeat domain) with THAP1 (via the HBM); the interaction recruits HCHC1 to the RRM1. Interacts with THAP7 and THAP11 (via the HMB). Interacts directly with OGT; the interaction, which requires the HCFC1 cleavage site domain, glycosylates and promotes the proteolytic processing of HCFC1, retains OGT in the nucleus and impacts the expression of herpes simplex virus immediate early viral genes. Component of the SET1 complex, at least composed of the catalytic subunit (SETD1A or SETD1B), WDR5, WDR82, RBBP5, ASH2L, CXXC1, HCFC1 and DPY30. Component of the NSL complex at least composed of MOF/KAT8, KANSL1, KANSL2, KANSL3, MCRS1, PHF20, OGT1/OGT, WDR5 and HCFC1. Component of a complex at least composed of ZNF335, HCFC1, CCAR2, EMSY, MKI67, RBBP5, ASH2L and WDR5; the complex is formed as a result of interactions between components of a nuclear receptor-mediated transcription complex and a histone methylation complex. Within the complex interacts with ZNF335. Interacts with TET2 and TET3. Interacts with HCFC1R1. Interacts with THAP11. Interacts (via Kelch domain) with KMT2E/MLL5 isoform 3 (via HBM motif). Interacts with E2F1. Accessory scaffold component of the polycomb repressive deubiquitinase (PR-DUB) complex, at least composed of BAP1, one of ASXL1, ASXL2 or (probably) ASXL3 and one of MBD5 or MBD6; the PR-DUB core associates with a number of accessory proteins, including FOXK1, FOXK2, KDM1B, HCFC1, YY1 and OGT. Interacts with YY1 (via Gly-rich region); the interaction is direct. Interacts with BAP1 (via HBM-like motif). In terms of processing, proteolytically cleaved at one or several PPCE--THET sites within the HCF repeats. Further cleavage of the primary N- and C-terminal chains results in a 'trimming' and accumulation of the smaller chains. Cleavage is promoted by O-glycosylation. O-glycosylated. GlcNAcylation by OGT promotes proteolytic processing. Post-translationally, ubiquitinated. Lys-1818 and Lys-1819 are ubiquitinated both via 'Lys-48'- and 'Lys-63'-linked polyubiquitin chains. BAP1 mediated deubiquitination of 'Lys-48'-linked polyubiquitin chains; deubiquitination by BAP1 does not seem to stabilize the protein.

Its subcellular location is the cytoplasm. The protein localises to the nucleus. Transcriptional coregulator. Serves as a scaffold protein, bridging interactions between transcription factors, including THAP11 and ZNF143, and transcriptional coregulators. Involved in control of the cell cycle. Also antagonizes transactivation by ZBTB17 and GABP2; represses ZBTB17 activation of the p15(INK4b) promoter and inhibits its ability to recruit p300. Coactivator for EGR2 and GABP2. Tethers the chromatin modifying Set1/Ash2 histone H3 'Lys-4' methyltransferase (H3K4me) and Sin3 histone deacetylase (HDAC) complexes (involved in the activation and repression of transcription, respectively) together. Component of a THAP1/THAP3-HCFC1-OGT complex that is required for the regulation of the transcriptional activity of RRM1. As part of the NSL complex it may be involved in acetylation of nucleosomal histone H4 on several lysine residues. Recruits KMT2E/MLL5 to E2F1 responsive promoters promoting transcriptional activation and thereby facilitates G1 to S phase transition. Modulates expression of homeobox protein PDX1, perhaps acting in concert with transcription factor E2F1, thereby regulating pancreatic beta-cell growth and glucose-stimulated insulin secretion. May negatively modulate transcriptional activity of FOXO3. This Rattus norvegicus (Rat) protein is Host cell factor 1.